Consider the following 60-residue polypeptide: Acrosin (60 aa).

A glycan (N-linked (GlcNAc...) asparagine) is linked at Asn-3. The region spanning 24–60 is the Peptidase S1 domain; the sequence is IIGGQDAAHGSWPWMVSLQIFTYHNNRRYHVCGGSLL.

This sequence belongs to the peptidase S1 family. In terms of assembly, heavy chain (catalytic) and a light chain linked by two disulfide bonds. Forms a heterodimer with SERPINA5.

The catalysed reaction is Preferential cleavage: Arg-|-Xaa, Lys-|-Xaa.. Inhibited by SERPINA5. In terms of biological role, acrosin is the major protease of mammalian spermatozoa. It is a serine protease of trypsin-like cleavage specificity, it is synthesized in a zymogen form, proacrosin and stored in the acrosome. The polypeptide is Acrosin (ACR) (Capra hircus (Goat)).